A 209-amino-acid chain; its full sequence is Ribonuclease HII (209 aa).

One can recognise an RNase H type-2 domain in the interval 18–209; the sequence is GLVAGVDEVG…FKPVKALLER (192 aa). 3 residues coordinate a divalent metal cation: Asp-24, Glu-25, and Asp-116.

Belongs to the RNase HII family. The cofactor is Mn(2+). Mg(2+) serves as cofactor.

Its subcellular location is the cytoplasm. The enzyme catalyses Endonucleolytic cleavage to 5'-phosphomonoester.. Its function is as follows. Endonuclease that specifically degrades the RNA of RNA-DNA hybrids. This Shewanella sp. (strain MR-7) protein is Ribonuclease HII.